A 337-amino-acid chain; its full sequence is Phosphate acyltransferase (337 aa).

This sequence belongs to the PlsX family. In terms of assembly, homodimer. Probably interacts with PlsY.

The protein localises to the cytoplasm. It carries out the reaction a fatty acyl-[ACP] + phosphate = an acyl phosphate + holo-[ACP]. Its pathway is lipid metabolism; phospholipid metabolism. Functionally, catalyzes the reversible formation of acyl-phosphate (acyl-PO(4)) from acyl-[acyl-carrier-protein] (acyl-ACP). This enzyme utilizes acyl-ACP as fatty acyl donor, but not acyl-CoA. The sequence is that of Phosphate acyltransferase from Hydrogenovibrio crunogenus (strain DSM 25203 / XCL-2) (Thiomicrospira crunogena).